The primary structure comprises 489 residues: MENKNKAEYYSPDDEDRDIDNQENIIHQFGKGRKEREDDKSKPSSPHHKDYMNIDNIEGGAVNVMVKRERSPPEHNSMASSSTHKEQDDQLASAKDEMREVMEENQRLRMHLDRMMKEYRNLQNQFHDIVQKETDQKSSSTTVNTSTTHHDHESDQEADQLVSLSLGRTTSDMKKDDLSKILKKDKVHDDEGVSNNNKSLDLGLDCKFETTPTECSPVNYSPENSLDDIQANKDENEETSNKNLKTMRNNGDGDDVSQQNPTKRARVSVRVRCDAPTMNDGCQWRKYGQKIAKGNPCPRAYYRCTVAPNCPVRKQVQRCAEDMSILITTYEGTHNHTLPLSATAMASTTSAAASMLLSGSSNSSDPNPQVTATTTTTPTTTTSANINGLNFYLSDTSKHHKSPYYFPNSSISASAPNSLPTITLDLTSTSSSSPSSLSHLNRMTQNFPPRYNYNNNNSTTNLNFSSVLESNSLPISWTNNYPNQTYNKK.

Disordered stretches follow at residues 1–100 (MENK…EMRE), 131–159 (QKET…QEAD), and 234–267 (DENE…RARV). Composition is skewed to basic and acidic residues over residues 32-52 (GRKE…KDYM) and 83-100 (THKE…EMRE). Residues 84 to 132 (HKEQDDQLASAKDEMREVMEENQRLRMHLDRMMKEYRNLQNQFHDIVQK) are a coiled coil. Low complexity predominate over residues 138 to 147 (SSSTTVNTST). Positions 273 to 339 (CDAPTMNDGC…YEGTHNHTLP (67 aa)) form a DNA-binding region, WRKY. 2 disordered regions span residues 356 to 381 (LLSG…PTTT) and 427 to 454 (TSTS…YNYN). Low complexity-rich tracts occupy residues 371–381 (TATTTTTPTTT) and 427–438 (TSTSSSSPSSLS).

Belongs to the WRKY group II-b family.

It localises to the nucleus. In terms of biological role, in association with WRKY72A, contributes to basal defense against root-knot nematodes (RKNs) and potato aphids, as well as Mi-1-mediated gene-for-gene resistance to these pests. Both WRKY72A and WRKY72B are not required for gene-for-gene resistance mediated by Pto, another tomato R gene. This chain is WRKY transcription factor 72B, found in Solanum lycopersicum (Tomato).